A 399-amino-acid chain; its full sequence is S-adenosylmethionine synthase (399 aa).

ATP is bound at residue H15. Position 17 (D17) interacts with Mg(2+). Residue E43 coordinates K(+). The L-methionine site is built by E56 and Q99. Residues 99-109 (QSPDIARGVNR) form a flexible loop region. Residues 166–168 (DAK), 232–233 (RF), D241, 247–248 (RK), A264, and K268 contribute to the ATP site. D241 is an L-methionine binding site. K272 serves as a coordination point for L-methionine.

Belongs to the AdoMet synthase family. In terms of assembly, homotetramer; dimer of dimers. Mg(2+) serves as cofactor. Requires K(+) as cofactor.

Its subcellular location is the cytoplasm. The catalysed reaction is L-methionine + ATP + H2O = S-adenosyl-L-methionine + phosphate + diphosphate. It functions in the pathway amino-acid biosynthesis; S-adenosyl-L-methionine biosynthesis; S-adenosyl-L-methionine from L-methionine: step 1/1. In terms of biological role, catalyzes the formation of S-adenosylmethionine (AdoMet) from methionine and ATP. The overall synthetic reaction is composed of two sequential steps, AdoMet formation and the subsequent tripolyphosphate hydrolysis which occurs prior to release of AdoMet from the enzyme. This chain is S-adenosylmethionine synthase, found in Nitrosospira multiformis (strain ATCC 25196 / NCIMB 11849 / C 71).